The sequence spans 282 residues: 4-diphosphocytidyl-2-C-methyl-D-erythritol kinase (282 aa).

K9 is an active-site residue. 98–108 serves as a coordination point for ATP; that stretch reads PMGGGLGGGSS. D140 is a catalytic residue.

The protein belongs to the GHMP kinase family. IspE subfamily. In terms of assembly, homodimer.

The catalysed reaction is 4-CDP-2-C-methyl-D-erythritol + ATP = 4-CDP-2-C-methyl-D-erythritol 2-phosphate + ADP + H(+). It participates in isoprenoid biosynthesis; isopentenyl diphosphate biosynthesis via DXP pathway; isopentenyl diphosphate from 1-deoxy-D-xylulose 5-phosphate: step 3/6. In terms of biological role, catalyzes the phosphorylation of the position 2 hydroxy group of 4-diphosphocytidyl-2C-methyl-D-erythritol. The sequence is that of 4-diphosphocytidyl-2-C-methyl-D-erythritol kinase from Salmonella schwarzengrund (strain CVM19633).